The chain runs to 144 residues: Small ribosomal subunit protein uS12 (144 aa).

Residue Asp103 is modified to 3-methylthioaspartic acid. Residues 121–144 (VANRKQGRSKYGTKKASAVPAKKK) form a disordered region.

The protein belongs to the universal ribosomal protein uS12 family. In terms of assembly, part of the 30S ribosomal subunit. Contacts proteins S8 and S17. May interact with IF1 in the 30S initiation complex.

Its function is as follows. With S4 and S5 plays an important role in translational accuracy. Functionally, interacts with and stabilizes bases of the 16S rRNA that are involved in tRNA selection in the A site and with the mRNA backbone. Located at the interface of the 30S and 50S subunits, it traverses the body of the 30S subunit contacting proteins on the other side and probably holding the rRNA structure together. The combined cluster of proteins S8, S12 and S17 appears to hold together the shoulder and platform of the 30S subunit. The chain is Small ribosomal subunit protein uS12 from Roseiflexus castenholzii (strain DSM 13941 / HLO8).